The chain runs to 393 residues: S-adenosylmethionine synthase 1 (393 aa).

E9 serves as a coordination point for Mg(2+). H15 is a binding site for ATP. E43 provides a ligand contact to K(+). Residues E56 and Q99 each contribute to the L-methionine site. ATP contacts are provided by residues 167–169, 235–238, D246, 252–253, A269, K273, and K277; these read DGK, SGRF, and RK. Residue D246 participates in L-methionine binding. An L-methionine-binding site is contributed by K277.

It belongs to the AdoMet synthase family. Homotetramer. Requires Mn(2+) as cofactor. The cofactor is Mg(2+). Co(2+) is required as a cofactor. K(+) serves as cofactor.

It localises to the cytoplasm. It carries out the reaction L-methionine + ATP + H2O = S-adenosyl-L-methionine + phosphate + diphosphate. The protein operates within amino-acid biosynthesis; S-adenosyl-L-methionine biosynthesis; S-adenosyl-L-methionine from L-methionine: step 1/1. Catalyzes the formation of S-adenosylmethionine from methionine and ATP. The reaction comprises two steps that are both catalyzed by the same enzyme: formation of S-adenosylmethionine (AdoMet) and triphosphate, and subsequent hydrolysis of the triphosphate. This Picea sitchensis (Sitka spruce) protein is S-adenosylmethionine synthase 1 (METK1).